The primary structure comprises 495 residues: Phosphomethylpyrimidine synthase (495 aa).

Residues N125, M154, Y183, H219, 239–241, 280–283, and E319 each bind substrate; these read SRG and DGLR. H323 is a Zn(2+) binding site. Y346 lines the substrate pocket. Residue H387 participates in Zn(2+) binding. 3 residues coordinate [4Fe-4S] cluster: C467, C470, and C475.

This sequence belongs to the ThiC family. It depends on [4Fe-4S] cluster as a cofactor.

It catalyses the reaction 5-amino-1-(5-phospho-beta-D-ribosyl)imidazole + S-adenosyl-L-methionine = 4-amino-2-methyl-5-(phosphooxymethyl)pyrimidine + CO + 5'-deoxyadenosine + formate + L-methionine + 3 H(+). It participates in cofactor biosynthesis; thiamine diphosphate biosynthesis. Its function is as follows. Catalyzes the synthesis of the hydroxymethylpyrimidine phosphate (HMP-P) moiety of thiamine from aminoimidazole ribotide (AIR) in a radical S-adenosyl-L-methionine (SAM)-dependent reaction. The sequence is that of Phosphomethylpyrimidine synthase from Leptospira interrogans serogroup Icterohaemorrhagiae serovar copenhageni (strain Fiocruz L1-130).